A 315-amino-acid chain; its full sequence is Replication factor C small subunit (315 aa).

ATP is bound at residue 43-50; the sequence is GSPGVGKT.

Belongs to the activator 1 small subunits family. RfcS subfamily. Heteromultimer composed of small subunits (RfcS) and large subunits (RfcL).

Functionally, part of the RFC clamp loader complex which loads the PCNA sliding clamp onto DNA. The polypeptide is Replication factor C small subunit (Methanococcus maripaludis (strain C6 / ATCC BAA-1332)).